The following is a 142-amino-acid chain: Large ribosomal subunit protein uL13 (142 aa).

Belongs to the universal ribosomal protein uL13 family. In terms of assembly, part of the 50S ribosomal subunit.

Functionally, this protein is one of the early assembly proteins of the 50S ribosomal subunit, although it is not seen to bind rRNA by itself. It is important during the early stages of 50S assembly. This Hydrogenovibrio crunogenus (strain DSM 25203 / XCL-2) (Thiomicrospira crunogena) protein is Large ribosomal subunit protein uL13.